A 385-amino-acid chain; its full sequence is ATP phosphoribosyltransferase regulatory subunit (385 aa).

The protein belongs to the class-II aminoacyl-tRNA synthetase family. HisZ subfamily. Heteromultimer composed of HisG and HisZ subunits.

The protein localises to the cytoplasm. Its pathway is amino-acid biosynthesis; L-histidine biosynthesis; L-histidine from 5-phospho-alpha-D-ribose 1-diphosphate: step 1/9. In terms of biological role, required for the first step of histidine biosynthesis. May allow the feedback regulation of ATP phosphoribosyltransferase activity by histidine. This is ATP phosphoribosyltransferase regulatory subunit from Bordetella avium (strain 197N).